Reading from the N-terminus, the 332-residue chain is Ubiquinone biosynthesis protein COQ4, mitochondrial (332 aa).

The transit peptide at 1–24 directs the protein to the mitochondrion; that stretch reads MLRLGVSRTPINRQFVGYEQRRHF. Zn(2+) is bound by residues H210, D211, H214, and E226.

It belongs to the COQ4 family. Component of a multi-subunit COQ enzyme complex, composed of at least COQ3, COQ4, COQ5, COQ6, COQ7 and COQ9. It depends on Zn(2+) as a cofactor.

The protein localises to the mitochondrion inner membrane. It carries out the reaction a 4-hydroxy-3-methoxy-5-(all-trans-polyprenyl)benzoate + H(+) = a 2-methoxy-6-(all-trans-polyprenyl)phenol + CO2. It functions in the pathway cofactor biosynthesis; ubiquinone biosynthesis. Lyase that catalyzes the C1-decarboxylation of 4-hydroxy-3-methoxy-5-(all-trans-polyprenyl)benzoic acid into 2-methoxy-6-(all-trans-polyprenyl)phenol during ubiquinone biosynthesis. The chain is Ubiquinone biosynthesis protein COQ4, mitochondrial from Zygosaccharomyces rouxii (strain ATCC 2623 / CBS 732 / NBRC 1130 / NCYC 568 / NRRL Y-229).